A 222-amino-acid polypeptide reads, in one-letter code: Phosphoribosylformylglycinamidine synthase subunit PurQ (222 aa).

Residues Ser3–Ala222 enclose the Glutamine amidotransferase type-1 domain. Cys86 functions as the Nucleophile in the catalytic mechanism. Residues His196 and Glu198 contribute to the active site.

Part of the FGAM synthase complex composed of 1 PurL, 1 PurQ and 2 PurS subunits.

Its subcellular location is the cytoplasm. It carries out the reaction N(2)-formyl-N(1)-(5-phospho-beta-D-ribosyl)glycinamide + L-glutamine + ATP + H2O = 2-formamido-N(1)-(5-O-phospho-beta-D-ribosyl)acetamidine + L-glutamate + ADP + phosphate + H(+). The catalysed reaction is L-glutamine + H2O = L-glutamate + NH4(+). Its pathway is purine metabolism; IMP biosynthesis via de novo pathway; 5-amino-1-(5-phospho-D-ribosyl)imidazole from N(2)-formyl-N(1)-(5-phospho-D-ribosyl)glycinamide: step 1/2. Its function is as follows. Part of the phosphoribosylformylglycinamidine synthase complex involved in the purines biosynthetic pathway. Catalyzes the ATP-dependent conversion of formylglycinamide ribonucleotide (FGAR) and glutamine to yield formylglycinamidine ribonucleotide (FGAM) and glutamate. The FGAM synthase complex is composed of three subunits. PurQ produces an ammonia molecule by converting glutamine to glutamate. PurL transfers the ammonia molecule to FGAR to form FGAM in an ATP-dependent manner. PurS interacts with PurQ and PurL and is thought to assist in the transfer of the ammonia molecule from PurQ to PurL. The chain is Phosphoribosylformylglycinamidine synthase subunit PurQ from Mesorhizobium japonicum (strain LMG 29417 / CECT 9101 / MAFF 303099) (Mesorhizobium loti (strain MAFF 303099)).